Consider the following 1162-residue polypeptide: Integrin alpha-L (1162 aa).

An N-terminal signal peptide occupies residues 1-23 (MSFRIAGPRLLLLGLQLFAKAWS). The Extracellular portion of the chain corresponds to 24-1088 (YNLDTRPTQS…DLIHEKEMLH (1065 aa)). FG-GAP repeat units lie at residues 28–79 (TRPT…FCQP) and 80–138 (VSLH…GPML). A disulfide bond links Cys70 and Cys77. Residue Asn86 is glycosylated (N-linked (GlcNAc...) asparagine). 2 disulfide bridges follow: Cys108-Cys126 and Cys147-Cys199. Residues 153 to 325 (DLVFLFDGSQ…EKLKDLFTDL (173 aa)) enclose the VWFA domain. N-linked (GlcNAc...) asparagine glycosylation is found at Asn185 and Asn270. FG-GAP repeat units follow at residues 336-387 (NRQD…GATF), 390-443 (QEPL…GGRW), 444-504 (NQTQ…LFEM), 505-561 (VSEL…GLSP), and 565-625 (QRIQ…FSPE). N-linked (GlcNAc...) asparagine glycosylation is present at Asn444. Residues Asp466, Asp468, Asp470, Glu474, Asp528, Asn530, Asp532, Asp536, Asp588, Asp592, and Asp596 each contribute to the Ca(2+) site. An intrachain disulfide couples Cys651 to Cys705. 4 N-linked (GlcNAc...) asparagine glycosylation sites follow: Asn668, Asn696, Asn724, and Asn728. Cys768 and Cys774 form a disulfide bridge. Asn777 carries N-linked (GlcNAc...) asparagine glycosylation. A disulfide bridge links Cys841 with Cys857. N-linked (GlcNAc...) asparagine glycans are attached at residues Asn858, Asn881, Asn891, Asn900, and Asn928. 2 disulfide bridges follow: Cys994–Cys1010 and Cys1018–Cys1049. Asn1057 carries N-linked (GlcNAc...) asparagine glycosylation. The chain crosses the membrane as a helical span at residues 1089-1109 (VYVLSGIGGLVLLFLIFLALY). The Cytoplasmic portion of the chain corresponds to 1110–1162 (KVGFFKRNLKEKMEADGGVPNGSPPEDTDPLAVPGEETKDMGCLEPLRESDKD). Residues 1112-1116 (GFFKR) carry the GFFKR motif motif. Residues 1124–1162 (ADGGVPNGSPPEDTDPLAVPGEETKDMGCLEPLRESDKD) form a disordered region. Residues 1145-1162 (EETKDMGCLEPLRESDKD) show a composition bias toward basic and acidic residues.

It belongs to the integrin alpha chain family. As to quaternary structure, heterodimer of an alpha and a beta subunit. The ITGAL alpha subunit associates with the ITGB2 beta subunit. Interacts with THBD. Interacts with CD226. Post-translationally, in resting T-cells, up to 40% of surface ITGAL is constitutively phosphorylated. Phosphorylation causes conformational changes needed for ligand binding and is necessary for the activation by some physiological agents. Leukocytes.

Its subcellular location is the cell membrane. Functionally, integrin ITGAL/ITGB2 is a receptor for ICAM1, ICAM2, ICAM3 and ICAM4. Integrin ITGAL/ITGB2 is a receptor for F11R. Integrin ITGAL/ITGB2 is a receptor for the secreted form of ubiquitin-like protein ISG15; the interaction is mediated by ITGAL. Involved in a variety of immune phenomena including leukocyte-endothelial cell interaction, cytotoxic T-cell mediated killing, and antibody dependent killing by granulocytes and monocytes. Contributes to natural killer cell cytotoxicity. Involved in leukocyte adhesion and transmigration of leukocytes including T-cells and neutrophils. Acts as a platform at the immunological synapse to translate TCR engagement and density of the ITGAL ligand ICAM1 into graded adhesion. Required for generation of common lymphoid progenitor cells in bone marrow, indicating the role in lymphopoiesis. Integrin ITGAL/ITGB2 in association with ICAM3, contributes to apoptotic neutrophil phagocytosis by macrophages. The polypeptide is Integrin alpha-L (Mus musculus (Mouse)).